A 208-amino-acid chain; its full sequence is Thymidylate kinase (208 aa).

10–17 (GIDGSGKS) is a binding site for ATP.

The protein belongs to the thymidylate kinase family.

It carries out the reaction dTMP + ATP = dTDP + ADP. Its function is as follows. Phosphorylation of dTMP to form dTDP in both de novo and salvage pathways of dTTP synthesis. The sequence is that of Thymidylate kinase from Jannaschia sp. (strain CCS1).